A 1089-amino-acid polypeptide reads, in one-letter code: Ankyrin repeat and IBR domain-containing protein 1 (1089 aa).

Glycine 2 is lipidated: N-myristoyl glycine. ANK repeat units follow at residues 45 to 74 (QHNT…NPNK) and 144 to 173 (KKNT…DLFA). The segment at 281-321 (CQRSGVQMPTPPPSGYNAWDTLPSPRTPRTTRSSVTSPDEI) is disordered. The segment covering 303–318 (PSPRTPRTTRSSVTSP) has biased composition (low complexity). A TRIAD supradomain region spans residues 329 to 569 (DTSLCDICMC…GGYYRCTRYE (241 aa)). Positions 333, 336, 351, 353, 356, 359, 378, 383, 465, 468, 473, 478, 519, and 522 each coordinate Zn(2+). The RING-type 1 zinc-finger motif lies at 333–383 (CDICMCSISVFEDPVDMPCGHDFCRGCWESFLNLKIQEGEAHNIFCPAYDC). The IBR-type zinc-finger motif lies at 401-478 (DKRYLQFDIK…LGEAHEPCDC (78 aa)). The RING-type 2; atypical zinc finger occupies 519–548 (CANCKSPIQKNEGCNHMQCAKCKYDFCWIC). Residue cysteine 532 is part of the active site. Zn(2+)-binding residues include cysteine 537, cysteine 540, cysteine 545, cysteine 548, histidine 555, and cysteine 565. Residues 575-640 (EEQSKEMTVE…RALKETEGGC (66 aa)) are a coiled coil. Serine 737 is modified (phosphoserine). The segment at 776 to 821 (RRGDVHSLLSNPPDPDEPSESTLDIPEGGSSSRRPGTSVVSSASMS) is disordered. Residues 851–870 (EDDPNILLAIQLSLQESGLA) form the UIM domain. 2 positions are modified to phosphoserine: serine 884 and serine 911. Disordered regions lie at residues 889–912 (GTSL…ALSS), 927–964 (AEND…QDPN), and 1026–1089 (DASV…VHLV). Polar residues-rich tracts occupy residues 931–941 (PFSTDTLSSHP) and 1070–1082 (DVSS…SSDW).

This sequence belongs to the RBR family.

The catalysed reaction is [E2 ubiquitin-conjugating enzyme]-S-ubiquitinyl-L-cysteine + [acceptor protein]-L-lysine = [E2 ubiquitin-conjugating enzyme]-L-cysteine + [acceptor protein]-N(6)-ubiquitinyl-L-lysine.. Might act as an E3 ubiquitin-protein ligase, or as part of E3 complex, which accepts ubiquitin from specific E2 ubiquitin-conjugating enzymes and then transfers it to substrates. The chain is Ankyrin repeat and IBR domain-containing protein 1 (ANKIB1) from Homo sapiens (Human).